Here is a 400-residue protein sequence, read N- to C-terminus: MQSVDVAIVGGGMVGLAVACGLQGSGLRVAVLEQRVQEPLAANAPPQLRVSAINAASEKLLTRLGVWQDILSRRASCYHGMEVWDKDSFGHISFDDQSMGYSHLGHIVENSVIHYALWNKAHQSSDITLLAPAELQQVAWGENETFLTLKDGSMLTARLVIGADGANSWLRNKADIPLTFWDYQHHALVATIRTEEPHDAVARQVFHGEGILAFLPLSDPHLCSIVWSLSPEEAQRMQQASEDEFNRALNIAFDNRLGLCKVESARQVFPLTGRYARQFASHRLALVGDAAHTIHPLAGQGVNLGFMDAAELIAELKRLHRQGKDIGQYIYLRRYERSRKHSAALMLAGMQGFRDLFSGTNPAKKLLRDIGLKLADTLPGVKPQLIRQAMGLNDLPEWLR.

Residues 49-52 (RVSA) and 297-303 (LAGQGVN) each bind FAD.

It belongs to the UbiH/COQ6 family. As to quaternary structure, homotetramer. Component of the Ubi complex metabolon, which regroups five ubiquinone biosynthesis proteins (UbiE, UbiF, UbiG, UbiH and UbiI) and two accessory factors (UbiK and the lipid-binding protein UbiJ). FAD is required as a cofactor.

The protein resides in the cytoplasm. It carries out the reaction 2-all-trans-octaprenylphenol + NADPH + O2 + H(+) = 3-(all-trans-octaprenyl)benzene-1,2-diol + NADP(+) + H2O. The catalysed reaction is a 2-(all-trans-polyprenyl)phenol + NADPH + O2 + H(+) = a 3-(all-trans-polyprenyl)benzene-1,2-diol + NADP(+) + H2O. The protein operates within cofactor biosynthesis; ubiquinone biosynthesis. FAD-dependent monooxygenase required for the aerobic hydroxylation of 2-octaprenylphenol to 2-octaprenyl-6-hydroxy-phenol, the first hydroxylation step in coenzyme Q (ubiquinone) biosynthesis. The sequence is that of 2-octaprenylphenol hydroxylase from Escherichia coli (strain K12).